Consider the following 116-residue polypeptide: Non-specific lipid-transfer protein (116 aa).

The N-terminal stretch at M1–G22 is a signal peptide. Disulfide bonds link C36-C52, C53-C98, and C73-C112.

It belongs to the plant LTP family.

In terms of biological role, plant non-specific lipid-transfer proteins transfer phospholipids as well as galactolipids across membranes. May play a role in wax or cutin deposition in the cell walls of expanding epidermal cells and certain secretory tissues. The chain is Non-specific lipid-transfer protein from Gossypium hirsutum (Upland cotton).